The sequence spans 203 residues: uncharacterized protein (203 aa).

The Fe cation site is built by H34, E97, and H172.

Belongs to the hemerythrin family.

The protein localises to the mitochondrion. This is an uncharacterized protein from Schizosaccharomyces pombe (strain 972 / ATCC 24843) (Fission yeast).